Here is an 89-residue protein sequence, read N- to C-terminus: Acylphosphatase (89 aa).

The 87-residue stretch at 3 to 89 (HIHLQVFGRV…NQKLSDFRSI (87 aa)) folds into the Acylphosphatase-like domain. Active-site residues include Arg18 and Asn36.

This sequence belongs to the acylphosphatase family.

The enzyme catalyses an acyl phosphate + H2O = a carboxylate + phosphate + H(+). The sequence is that of Acylphosphatase (acyP) from Staphylococcus aureus (strain Mu3 / ATCC 700698).